A 61-amino-acid chain; its full sequence is Small ribosomal subunit protein uS14 (61 aa).

Residues Cys-24, Cys-27, Cys-40, and Cys-43 each coordinate Zn(2+).

It belongs to the universal ribosomal protein uS14 family. Zinc-binding uS14 subfamily. As to quaternary structure, part of the 30S ribosomal subunit. Contacts proteins S3 and S10. It depends on Zn(2+) as a cofactor.

Its function is as follows. Binds 16S rRNA, required for the assembly of 30S particles and may also be responsible for determining the conformation of the 16S rRNA at the A site. The polypeptide is Small ribosomal subunit protein uS14 (Campylobacter lari (strain RM2100 / D67 / ATCC BAA-1060)).